The primary structure comprises 432 residues: D-amino acid dehydrogenase (432 aa).

3–17 (VLVLGSGVIGTASAY) is an FAD binding site.

It belongs to the DadA oxidoreductase family. Requires FAD as cofactor.

It catalyses the reaction a D-alpha-amino acid + A + H2O = a 2-oxocarboxylate + AH2 + NH4(+). The protein operates within amino-acid degradation; D-alanine degradation; NH(3) and pyruvate from D-alanine: step 1/1. Oxidative deamination of D-amino acids. This chain is D-amino acid dehydrogenase, found in Ectopseudomonas mendocina (strain ymp) (Pseudomonas mendocina).